Reading from the N-terminus, the 213-residue chain is Large ribosomal subunit protein uL1 (213 aa).

It belongs to the universal ribosomal protein uL1 family. As to quaternary structure, part of the 50S ribosomal subunit.

Its function is as follows. Binds directly to 23S rRNA. Probably involved in E site tRNA release. Protein L1 is also a translational repressor protein, it controls the translation of its operon by binding to its mRNA. This Picrophilus torridus (strain ATCC 700027 / DSM 9790 / JCM 10055 / NBRC 100828 / KAW 2/3) protein is Large ribosomal subunit protein uL1.